Consider the following 167-residue polypeptide: Ion-translocating oxidoreductase complex subunit B (167 aa).

Residues 1–22 (MITLIIFSFLSFLLGIILSFTA) form a hydrophobic region. In terms of domain architecture, 4Fe-4S spans 28-87 (QEDPIVAIVNELLPQSQCAQCGYSGCYPYAKAIVENSEKINKCIPGGTDLISAISSVLSI). Residues Cys-45, Cys-48, Cys-53, Cys-70, Cys-113, Cys-116, Cys-119, Cys-123, Cys-143, Cys-146, Cys-149, and Cys-153 each contribute to the [4Fe-4S] cluster site. 4Fe-4S ferredoxin-type domains follow at residues 104–133 (NTVL…GAPN) and 134–163 (FIHT…IKKE).

It belongs to the 4Fe4S bacterial-type ferredoxin family. RnfB subfamily. The complex is composed of six subunits: RnfA, RnfB, RnfC, RnfD, RnfE and RnfG. [4Fe-4S] cluster serves as cofactor.

It is found in the cell inner membrane. Functionally, part of a membrane-bound complex that couples electron transfer with translocation of ions across the membrane. The sequence is that of Ion-translocating oxidoreductase complex subunit B from Buchnera aphidicola subsp. Acyrthosiphon pisum (strain 5A).